Consider the following 599-residue polypeptide: UvrABC system protein C (599 aa).

The region spanning 19 to 95 is the GIY-YIG domain; sequence ESTGVYIFYD…IKKYRPIMNV (77 aa). A UVR domain is found at 206 to 241; sequence EEIIEKLYDQMQEYSKNLEFEKAAKIRDKIRLLQNL.

Belongs to the UvrC family. Interacts with UvrB in an incision complex.

Its subcellular location is the cytoplasm. The UvrABC repair system catalyzes the recognition and processing of DNA lesions. UvrC both incises the 5' and 3' sides of the lesion. The N-terminal half is responsible for the 3' incision and the C-terminal half is responsible for the 5' incision. The chain is UvrABC system protein C from Dictyoglomus thermophilum (strain ATCC 35947 / DSM 3960 / H-6-12).